Consider the following 642-residue polypeptide: Threonine--tRNA ligase (642 aa).

A TGS domain is found at 1–61 (MPVITLPDGS…SEDANLVIFT (61 aa)). A catalytic region spans residues 243 to 534 (DHRKLAKKFD…LIEHYEGSFP (292 aa)). Zn(2+) contacts are provided by C334, H385, and H511.

Belongs to the class-II aminoacyl-tRNA synthetase family. As to quaternary structure, homodimer. It depends on Zn(2+) as a cofactor.

It localises to the cytoplasm. The enzyme catalyses tRNA(Thr) + L-threonine + ATP = L-threonyl-tRNA(Thr) + AMP + diphosphate + H(+). In terms of biological role, catalyzes the attachment of threonine to tRNA(Thr) in a two-step reaction: L-threonine is first activated by ATP to form Thr-AMP and then transferred to the acceptor end of tRNA(Thr). Also edits incorrectly charged L-seryl-tRNA(Thr). This chain is Threonine--tRNA ligase, found in Cellvibrio japonicus (strain Ueda107) (Pseudomonas fluorescens subsp. cellulosa).